A 485-amino-acid chain; its full sequence is Sodium-coupled neutral amino acid symporter 1 (485 aa).

Residues 1–74 (MMHFKSGLEL…EYIPGTTSLG (74 aa)) lie on the Cytoplasmic side of the membrane. Serine 6 carries the phosphoserine modification. Threonine 11 carries the phosphothreonine modification. Phosphoserine is present on residues serine 25, serine 28, serine 49, and serine 52. Position 54 is a phosphothreonine (threonine 54). At serine 56 the chain carries Phosphoserine. A helical membrane pass occupies residues 75–97 (MSVFNLSNAIMGSGILGLAFALA). Over 98 to 112 (NTGILLFLILLTSVT) the chain is Extracellular. Residues 113-133 (LLSIYSINLLLICSKETGCMV) form a helical membrane-spanning segment. Residues 134–148 (YEKLGEQVFGTTGKL) lie on the Cytoplasmic side of the membrane. Residues 149–169 (VIFGATSLQNTGAMLSYLFIV) traverse the membrane as a helical segment. Over 170 to 188 (KNELPSAIKSLMGEEETFS) the chain is Extracellular. A helical membrane pass occupies residues 189–211 (AWYVDGRVLVVMVTFGIILPLCL). The Cytoplasmic portion of the chain corresponds to 212-216 (LKNLG). Residues 217–237 (YLGYTSGFSLSCMVFFLIVVI) form a helical membrane-spanning segment. At 238 to 273 (YKKFQIPCMNGEQNSTVSANVTDACTPKYVTFNSKT) the chain is on the extracellular side. Cysteines 245 and 262 form a disulfide. N-linked (GlcNAc...) asparagine glycans are attached at residues asparagine 251 and asparagine 257. Residues 274 to 294 (VYALPTIAFAFVCHPSVLPIY) traverse the membrane as a helical segment. At 295 to 310 (SELKDRSQKKMQMVSN) the chain is on the cytoplasmic side. The chain crosses the membrane as a helical span at residues 311 to 331 (ISFFAMFVMYFLTAIFGYLTF). The Extracellular portion of the chain corresponds to 332–348 (YEKVQSDLLHKYQSTGD). A helical membrane pass occupies residues 349 to 369 (ILILTVRLAVIVAVILTVPVL). At 370 to 391 (FFTVRSSLFELAKKTKFHLCRH) the chain is on the cytoplasmic side. The chain crosses the membrane as a helical span at residues 392–412 (VLVTIILLVIINLLVIFIPSM). Topologically, residues 413–414 (KD) are extracellular. The helical transmembrane segment at 415–435 (IFGVVGVTSANMLIFILPSSL) threads the bilayer. Over 436–450 (YLKITNQDGDKNTQR) the chain is Cytoplasmic. The chain crosses the membrane as a helical span at residues 451–471 (IWAALFLALGVLFSLISIPLV). The Extracellular segment spans residues 472–485 (IYDWACSSSNGEGH).

Belongs to the amino acid/polyamine transporter 2 family. Post-translationally, N-glycosylation plays an important role in the L-glutamine transport. Specifically expressed in brain with the highest levels in cerebellum and thalamus (at protein level). Expressed in glutamatergic, GABAergic and a subset of dopaminergic neurons of the substantia nigra and cholinergic motoneurons (at protein level). Also expressed by ependymal cells lining the ventricle (at protein level). Expression is also detected in spinal cord, heart, colon and placenta.

The protein localises to the cell membrane. The enzyme catalyses L-glutamine(in) + Na(+)(in) = L-glutamine(out) + Na(+)(out). It catalyses the reaction L-alanine(in) + Na(+)(in) = L-alanine(out) + Na(+)(out). The catalysed reaction is L-asparagine(in) + Na(+)(in) = L-asparagine(out) + Na(+)(out). It carries out the reaction L-histidine(in) + Na(+)(in) = L-histidine(out) + Na(+)(out). The enzyme catalyses L-serine(in) + Na(+)(in) = L-serine(out) + Na(+)(out). It catalyses the reaction L-cysteine(in) + Na(+)(in) = L-cysteine(out) + Na(+)(out). The catalysed reaction is L-methionine(in) + Na(+)(in) = L-methionine(out) + Na(+)(out). It carries out the reaction glycine(in) + Na(+)(in) = glycine(out) + Na(+)(out). The enzyme catalyses L-threonine(in) + Na(+)(in) = L-threonine(out) + Na(+)(out). It catalyses the reaction L-proline(in) + Na(+)(in) = L-proline(out) + Na(+)(out). With respect to regulation, inhibited by alpha-(methylamino)isobutyric acid (MeAIB). Inhibited by lithium, potassium, choline ions, N-methylglucamine. The pH dependence has an allosteric effect on the transport. Symporter that cotransports short-chain neutral amino acids and sodium ions from the extraccellular to the intracellular side of the cell membrane. The transport is elctrogenic, pH dependent and driven by the Na(+) electrochemical gradient. Participates in the astroglia-derived glutamine transport into GABAergic interneurons for neurotransmitter GABA de novo synthesis. May also contributes to amino acid transport in placental trophoblast. Regulates synaptic plasticity. This is Sodium-coupled neutral amino acid symporter 1 from Rattus norvegicus (Rat).